Reading from the N-terminus, the 554-residue chain is Wee1-like protein kinase 2-C (554 aa).

Disordered regions lie at residues 1–86 (MRTA…GGEC) and 145–183 (TLVN…SQMK). 2 stretches are compositionally biased toward polar residues: residues 38–48 (SPVSSWRTNNC) and 147–163 (VNVN…THFQ). Residues 213–487 (FLEIEKIGAG…AKNSVLRRCV (275 aa)) enclose the Protein kinase domain. ATP-binding positions include 219–227 (IGAGEFGSV) and lysine 242. The active-site Proton acceptor is the aspartate 340. Residues asparagine 345 and aspartate 377 each coordinate Mg(2+). The stretch at 490–516 (AAELQKQLNVEKFKTAMLERELQAAKL) forms a coiled coil.

Belongs to the protein kinase superfamily. Ser/Thr protein kinase family. WEE1 subfamily.

It localises to the nucleus. The catalysed reaction is L-tyrosyl-[protein] + ATP = O-phospho-L-tyrosyl-[protein] + ADP + H(+). Its function is as follows. Protein tyrosine kinase that phosphorylates and inhibits cdk1 and acts as a regulator of meiosis in oocytes. Required to ensure the meiotic cell cycle in oocytes by phosphorylating cdk1 at 'Tyr-15', leading to inhibit cdk1 activity and prevent meiosis. In Xenopus laevis (African clawed frog), this protein is Wee1-like protein kinase 2-C (wee2-c).